We begin with the raw amino-acid sequence, 382 residues long: 3-dehydroquinate synthase (382 aa).

NAD(+) contacts are provided by residues 81–86 (EGEGSK), 115–119 (GVVGD), 139–140 (TS), lysine 152, and lysine 161. 3 residues coordinate Zn(2+): glutamate 194, histidine 256, and histidine 274.

Belongs to the sugar phosphate cyclases superfamily. Dehydroquinate synthase family. The cofactor is Co(2+). It depends on Zn(2+) as a cofactor. NAD(+) is required as a cofactor.

Its subcellular location is the cytoplasm. The enzyme catalyses 7-phospho-2-dehydro-3-deoxy-D-arabino-heptonate = 3-dehydroquinate + phosphate. It participates in metabolic intermediate biosynthesis; chorismate biosynthesis; chorismate from D-erythrose 4-phosphate and phosphoenolpyruvate: step 2/7. Functionally, catalyzes the conversion of 3-deoxy-D-arabino-heptulosonate 7-phosphate (DAHP) to dehydroquinate (DHQ). The protein is 3-dehydroquinate synthase of Bradyrhizobium sp. (strain BTAi1 / ATCC BAA-1182).